Consider the following 1067-residue polypeptide: DNA-directed RNA polymerase subunit beta (1067 aa).

The protein belongs to the RNA polymerase beta chain family. As to quaternary structure, in plastids the minimal PEP RNA polymerase catalytic core is composed of four subunits: alpha, beta, beta', and beta''. When a (nuclear-encoded) sigma factor is associated with the core the holoenzyme is formed, which can initiate transcription.

It is found in the plastid. The protein localises to the chloroplast. It carries out the reaction RNA(n) + a ribonucleoside 5'-triphosphate = RNA(n+1) + diphosphate. Functionally, DNA-dependent RNA polymerase catalyzes the transcription of DNA into RNA using the four ribonucleoside triphosphates as substrates. This Ipomoea purpurea (Common morning glory) protein is DNA-directed RNA polymerase subunit beta.